Here is a 477-residue protein sequence, read N- to C-terminus: Aspartyl/glutamyl-tRNA(Asn/Gln) amidotransferase subunit B (477 aa).

Belongs to the GatB/GatE family. GatB subfamily. As to quaternary structure, heterotrimer of A, B and C subunits.

The catalysed reaction is L-glutamyl-tRNA(Gln) + L-glutamine + ATP + H2O = L-glutaminyl-tRNA(Gln) + L-glutamate + ADP + phosphate + H(+). The enzyme catalyses L-aspartyl-tRNA(Asn) + L-glutamine + ATP + H2O = L-asparaginyl-tRNA(Asn) + L-glutamate + ADP + phosphate + 2 H(+). Its function is as follows. Allows the formation of correctly charged Asn-tRNA(Asn) or Gln-tRNA(Gln) through the transamidation of misacylated Asp-tRNA(Asn) or Glu-tRNA(Gln) in organisms which lack either or both of asparaginyl-tRNA or glutaminyl-tRNA synthetases. The reaction takes place in the presence of glutamine and ATP through an activated phospho-Asp-tRNA(Asn) or phospho-Glu-tRNA(Gln). This is Aspartyl/glutamyl-tRNA(Asn/Gln) amidotransferase subunit B from Coxiella burnetii (strain RSA 493 / Nine Mile phase I).